The following is a 119-amino-acid chain: Large ribosomal subunit protein uL22c (119 aa).

Belongs to the universal ribosomal protein uL22 family. In terms of assembly, part of the 50S ribosomal subunit.

The protein localises to the plastid. Its subcellular location is the chloroplast. In terms of biological role, this protein binds specifically to 23S rRNA. Functionally, the globular domain of the protein is located near the polypeptide exit tunnel on the outside of the subunit, while an extended beta-hairpin is found that lines the wall of the exit tunnel in the center of the 70S ribosome. The chain is Large ribosomal subunit protein uL22c (rpl22) from Chlorokybus atmophyticus (Soil alga).